Consider the following 350-residue polypeptide: Twinfilin-1 (350 aa).

N-acetylserine is present on serine 2. An ADF-H 1 domain is found at 2-139; that stretch reads SHQTGIQASE…SLHGYKKYLL (138 aa). A phosphoserine mark is found at serine 143 and serine 277. The ADF-H 2 domain maps to 175–313; the sequence is LQGVAFPISR…TADFLYEEVH (139 aa). The residue at position 309 (tyrosine 309) is a Phosphotyrosine. The interval 316–350 is disordered; the sequence is QHAHKQSFAKPKGPAGKRGIRRLIRGPAETEATTD. Threonine 349 carries the post-translational modification Phosphothreonine.

It belongs to the actin-binding proteins ADF family. Twinfilin subfamily. In terms of assembly, interacts with G-actin; ADP-actin form and capping protein (CP). May also be able to interact with TWF2 and phosphoinositides, PI(4,5)P2. When bound to PI(4,5)P2, it is down-regulated. Interacts with ACTG1. Phosphorylated on serine and threonine residues. In terms of tissue distribution, expressed at high levels in the colon, testis, ovary, prostate and lung. Expressed at lower levels in the brain, bladder and heart. Not detected in liver.

The protein localises to the cytoplasm. The protein resides in the cytoskeleton. Functionally, actin-binding protein involved in motile and morphological processes. Inhibits actin polymerization, likely by sequestering G-actin. By capping the barbed ends of filaments, it also regulates motility. Seems to play an important role in clathrin-mediated endocytosis and distribution of endocytic organelles. This Homo sapiens (Human) protein is Twinfilin-1 (TWF1).